A 573-amino-acid chain; its full sequence is Mucin-13 (573 aa).

Residues 1-17 form the signal peptide; that stretch reads MKGFLLLSLSLLLVTVG. Low complexity predominate over residues 16–234; that stretch reads VGSSSQASST…VPSGGSTGPS (219 aa). Residues 16 to 237 form a disordered region; sequence VGSSSQASST…GGSTGPSDLC (222 aa). Over 18 to 480 the chain is Extracellular; the sequence is SSSQASSTTS…FGYSGMNCKD (463 aa). Residues 233 to 273 enclose the EGF-like 1 domain; it reads PSDLCNPNPCKGTASCVKLHSKHFCLCLEGYYYNSSLSSCV. Disulfide bonds link Cys237/Cys248, Cys242/Cys257, and Cys259/Cys272. Asn266, Asn316, and Asn397 each carry an N-linked (GlcNAc...) asparagine glycan. One can recognise an SEA domain in the interval 274 to 391; the sequence is KGTTFPGDIS…DYVSINLCDH (118 aa). EGF-like domains lie at 385 to 425 and 425 to 467; these read SINL…PFCV and VAVT…RKCE. 6 disulfide bridges follow: Cys389–Cys402, Cys394–Cys408, Cys410–Cys424, Cys429–Cys441, Cys433–Cys451, and Cys453–Cys466. Residues 481-508 form a helical membrane-spanning segment; sequence QFQLILTIVGTIAGALILILLIAFIVSA. Residues 509–573 lie on the Cytoplasmic side of the membrane; sequence RSKNKKKDGE…NQRSMPRPDY (65 aa). Residues 548–573 form a disordered region; it reads PKVRTGVPSQTPNPYANQRSMPRPDY. Residues 554–567 are compositionally biased toward polar residues; the sequence is VPSQTPNPYANQRS.

In terms of assembly, homodimer of beta subunits. In terms of processing, cleaved into two subunits, alpha and beta, probably between the first EGF domain and the SEA domain. Beta subunit contains the cytoplasmic tail and alpha subunit the extracellular tail. The homooligomerization into dimers is dependent on intrachain disulfide bonds. Highly N-glycosylated.

The protein resides in the cell membrane. The protein localises to the secreted. In terms of biological role, epithelial and hemopoietic transmembrane mucin that may play a role in cell signaling. In Mus musculus (Mouse), this protein is Mucin-13 (Muc13).